A 130-amino-acid polypeptide reads, in one-letter code: Small ribosomal subunit protein uS11 (130 aa).

It belongs to the universal ribosomal protein uS11 family. As to quaternary structure, part of the 30S ribosomal subunit. Interacts with proteins S7 and S18. Binds to IF-3.

In terms of biological role, located on the platform of the 30S subunit, it bridges several disparate RNA helices of the 16S rRNA. Forms part of the Shine-Dalgarno cleft in the 70S ribosome. This chain is Small ribosomal subunit protein uS11, found in Psychrobacter sp. (strain PRwf-1).